The primary structure comprises 112 residues: Putative UPF0320 protein YEL074W (112 aa).

The segment at 93–112 is disordered; sequence EKSPSKSPKHKNILPFNFTK.

Belongs to the UPF0320 family.

This Saccharomyces cerevisiae (strain ATCC 204508 / S288c) (Baker's yeast) protein is Putative UPF0320 protein YEL074W.